The sequence spans 159 residues: Protein NrdI (159 aa).

This sequence belongs to the NrdI family.

Its function is as follows. Probably involved in ribonucleotide reductase function. This Rhodococcus erythropolis (strain PR4 / NBRC 100887) protein is Protein NrdI.